The chain runs to 239 residues: RNA polymerase sigma factor FliA (239 aa).

The sigma-70 factor domain-2 stretch occupies residues 16–88 (LWQRYVPLVR…MLDELRSRDW (73 aa)). Positions 43–46 (DLLQ) match the Interaction with polymerase core subunit RpoC motif. The sigma-70 factor domain-3 stretch occupies residues 96 to 166 (NAREVAQAMG…IELVTEEHQQ (71 aa)). Positions 185 to 233 (AIESLPEREQLVLTLYYQEELNLKEIGAVLEVGESRVSQLHSQAIKRLR) are sigma-70 factor domain-4. Positions 207–226 (LKEIGAVLEVGESRVSQLHS) form a DNA-binding region, H-T-H motif.

It belongs to the sigma-70 factor family. FliA subfamily.

The protein resides in the cytoplasm. In terms of biological role, sigma factors are initiation factors that promote the attachment of RNA polymerase to specific initiation sites and are then released. This sigma factor controls the expression of flagella-related genes. This Salmonella typhi protein is RNA polymerase sigma factor FliA.